The chain runs to 236 residues: Phosphoribosylaminoimidazole-succinocarboxamide synthase (236 aa).

This sequence belongs to the SAICAR synthetase family.

It carries out the reaction 5-amino-1-(5-phospho-D-ribosyl)imidazole-4-carboxylate + L-aspartate + ATP = (2S)-2-[5-amino-1-(5-phospho-beta-D-ribosyl)imidazole-4-carboxamido]succinate + ADP + phosphate + 2 H(+). The protein operates within purine metabolism; IMP biosynthesis via de novo pathway; 5-amino-1-(5-phospho-D-ribosyl)imidazole-4-carboxamide from 5-amino-1-(5-phospho-D-ribosyl)imidazole-4-carboxylate: step 1/2. This Pseudomonas putida (strain GB-1) protein is Phosphoribosylaminoimidazole-succinocarboxamide synthase.